The sequence spans 160 residues: Probable dihydroneopterin aldolase 3 (160 aa).

Substrate-binding positions include glutamate 59, phenylalanine 91, and 110–111 (YE). The active-site Proton donor/acceptor is the lysine 137.

Belongs to the DHNA family. As to quaternary structure, homooctamer. Forms a hollow cylinder assembled from two ring-shaped tetramers. As to expression, expressed at very low levels in siliques.

It catalyses the reaction 7,8-dihydroneopterin = 6-hydroxymethyl-7,8-dihydropterin + glycolaldehyde. It participates in cofactor biosynthesis; tetrahydrofolate biosynthesis; 2-amino-4-hydroxy-6-hydroxymethyl-7,8-dihydropteridine diphosphate from 7,8-dihydroneopterin triphosphate: step 3/4. Functionally, catalyzes the conversion of 7,8-dihydroneopterin into 6-hydroxymethyl-7,8-dihydropterin, a biosynthetic precursor of the vitamin tetrahydrofolate. Can use L-threo-dihydroneopterin and D-erythro-dihydroneopterin as substrates for the formation of 6-hydroxymethyldihydropterin, but it can also catalyze the epimerization of carbon 2' of dihydroneopterin and dihydromonapterin. The sequence is that of Probable dihydroneopterin aldolase 3 from Arabidopsis thaliana (Mouse-ear cress).